Consider the following 126-residue polypeptide: Major sperm protein 1 (126 aa).

Alanine 2 carries the N-acetylalanine modification. The 118-residue stretch at 8–125 folds into the MSP domain; that stretch reads DIATMPAQKV…RRKNLPIEYN (118 aa).

In terms of tissue distribution, sperm.

Its subcellular location is the cell projection. It localises to the pseudopodium. The protein localises to the cytoplasm. The protein resides in the cytoskeleton. In terms of biological role, central component in molecular interactions underlying sperm crawling. Forms an extensive filament system that extends from sperm villipoda, along the leading edge of the pseudopod. In Globodera rostochiensis (Golden nematode worm), this protein is Major sperm protein 1 (MSP-1).